We begin with the raw amino-acid sequence, 235 residues long: Succinate dehydrogenase iron-sulfur subunit (235 aa).

[2Fe-2S] cluster is bound by residues cysteine 53, cysteine 58, and cysteine 73. The 4Fe-4S ferredoxin-type domain occupies 133–163 (ERAKLDGLYECILCACCSSSCPSYWWNPDKF). Residues cysteine 143, cysteine 146, and cysteine 149 each coordinate [4Fe-4S] cluster. [3Fe-4S] cluster is bound at residue cysteine 153. Tryptophan 158 serves as a coordination point for a ubiquinone. Cysteine 200 and cysteine 206 together coordinate [3Fe-4S] cluster. Cysteine 210 contributes to the [4Fe-4S] cluster binding site.

It belongs to the succinate dehydrogenase/fumarate reductase iron-sulfur protein family. Part of an enzyme complex containing four subunits: a flavoprotein, an iron-sulfur protein, cytochrome b-556 and a hydrophobic protein. [2Fe-2S] cluster is required as a cofactor. It depends on [3Fe-4S] cluster as a cofactor. Requires [4Fe-4S] cluster as cofactor.

It catalyses the reaction a quinone + succinate = fumarate + a quinol. Its pathway is carbohydrate metabolism; tricarboxylic acid cycle; fumarate from succinate (bacterial route): step 1/1. In Coxiella burnetii (strain RSA 493 / Nine Mile phase I), this protein is Succinate dehydrogenase iron-sulfur subunit (sdhB).